The primary structure comprises 880 residues: Beta-glucosidase 2 (880 aa).

Residues 1 to 17 (MLLILELLVLIIGLGVA) form the signal peptide. Asparagine 24, asparagine 77, and asparagine 271 each carry an N-linked (GlcNAc...) asparagine glycan. Residue aspartate 299 is part of the active site. 8 N-linked (GlcNAc...) asparagine glycosylation sites follow: asparagine 336, asparagine 343, asparagine 376, asparagine 548, asparagine 589, asparagine 712, asparagine 743, and asparagine 794.

The protein belongs to the glycosyl hydrolase 3 family.

It carries out the reaction Hydrolysis of terminal, non-reducing beta-D-glucosyl residues with release of beta-D-glucose.. Its pathway is glycan metabolism; cellulose degradation. The protein is Beta-glucosidase 2 (BGL2) of Saccharomycopsis fibuligera (Yeast).